We begin with the raw amino-acid sequence, 273 residues long: Dermonecrotic toxin LhSicTox-alphaIA1iv (273 aa).

Residue His-5 is part of the active site. Residues Glu-25 and Asp-27 each contribute to the Mg(2+) site. The active-site Nucleophile is the His-41. 2 disulfides stabilise this stretch: Cys-45–Cys-51 and Cys-47–Cys-190. Asp-85 serves as a coordination point for Mg(2+).

This sequence belongs to the arthropod phospholipase D family. Class II subfamily. Requires Mg(2+) as cofactor. As to expression, expressed by the venom gland.

The protein resides in the secreted. The enzyme catalyses an N-(acyl)-sphingosylphosphocholine = an N-(acyl)-sphingosyl-1,3-cyclic phosphate + choline. The catalysed reaction is an N-(acyl)-sphingosylphosphoethanolamine = an N-(acyl)-sphingosyl-1,3-cyclic phosphate + ethanolamine. It carries out the reaction a 1-acyl-sn-glycero-3-phosphocholine = a 1-acyl-sn-glycero-2,3-cyclic phosphate + choline. It catalyses the reaction a 1-acyl-sn-glycero-3-phosphoethanolamine = a 1-acyl-sn-glycero-2,3-cyclic phosphate + ethanolamine. Dermonecrotic toxins cleave the phosphodiester linkage between the phosphate and headgroup of certain phospholipids (sphingolipid and lysolipid substrates), forming an alcohol (often choline) and a cyclic phosphate. This toxin acts on sphingomyelin (SM). It may also act on ceramide phosphoethanolamine (CPE), lysophosphatidylcholine (LPC) and lysophosphatidylethanolamine (LPE), but not on lysophosphatidylserine (LPS), and lysophosphatidylglycerol (LPG). It acts by transphosphatidylation, releasing exclusively cyclic phosphate products as second products. Induces dermonecrosis, hemolysis, increased vascular permeability, edema, inflammatory response, and platelet aggregation. This chain is Dermonecrotic toxin LhSicTox-alphaIA1iv, found in Loxosceles hirsuta (Recluse spider).